Here is a 1089-residue protein sequence, read N- to C-terminus: Platelet-derived growth factor receptor alpha (1089 aa).

An N-terminal signal peptide occupies residues 1 to 23; it reads MGTSHPAFLVLGCLLTGLSLILC. Ig-like C2-type domains lie at 24-113, 117-201, 202-306, 319-410, and 414-517; these read QLSL…NELE, IYIY…FQTI, PFNV…KKVT, PTFS…FELL, and PSSI…LKLV. Residues 24-528 are Extracellular-facing; the sequence is QLSLPSILPN…PTLRSELTVA (505 aa). N-linked (GlcNAc...) asparagine glycosylation is found at Asn-42, Asn-76, Asn-103, and Asn-179. Cys-49 and Cys-100 are disulfide-bonded. Intrachain disulfides connect Cys-150-Cys-189 and Cys-235-Cys-290. N-linked (GlcNAc...) asparagine glycans are attached at residues Asn-353, Asn-359, Asn-458, and Asn-468. An intrachain disulfide couples Cys-435 to Cys-501. A helical transmembrane segment spans residues 529 to 549; the sequence is AAVLVLLVIVIISLIVLVVIW. The Cytoplasmic segment spans residues 550–1089; that stretch reads KQKPRYEIRW…SSDLVEDSFL (540 aa). Residues Tyr-572 and Tyr-574 each carry the phosphotyrosine; by autocatalysis modification. A Protein kinase domain is found at 593 to 954; the sequence is LVLGRVLGSG…HLSEIVENLL (362 aa). ATP-binding positions include 599 to 607 and Lys-627; that span reads LGSGAFGKV. 6 positions are modified to phosphotyrosine; by autocatalysis: Tyr-720, Tyr-731, Tyr-742, Tyr-754, Tyr-762, and Tyr-768. Asp-818 (proton acceptor) is an active-site residue. Phosphotyrosine; by autocatalysis is present on residues Tyr-849, Tyr-988, and Tyr-1018. The segment at 1018-1089 is disordered; that stretch reads YIIPLPDIDP…SSDLVEDSFL (72 aa). Positions 1041-1059 are enriched in polar residues; sequence SSQTSEESAIETGSSSSTF. Residues 1065–1089 show a composition bias toward acidic residues; it reads ETIEDIDMMDDIGIDSSDLVEDSFL.

The protein belongs to the protein kinase superfamily. Tyr protein kinase family. CSF-1/PDGF receptor subfamily. In terms of assembly, interacts with homodimeric PDGFA, PDGFB and PDGFC, and with heterodimers formed by PDGFA and PDGFB. Monomer in the absence of bound ligand. Interaction with dimeric PDGFA, PDGFB and/or PDGFC leads to receptor dimerization, where both PDGFRA homodimers and heterodimers with PDGFRB are observed. Interacts (tyrosine phosphorylated) with SHB (via SH2 domain). Interacts (tyrosine phosphorylated) with SHF (via SH2 domain). Interacts (tyrosine phosphorylated) with SRC (via SH2 domain). Interacts (tyrosine phosphorylated) with PIK3R1. Interacts (tyrosine phosphorylated) with PLCG1 (via SH2 domain). Interacts (tyrosine phosphorylated) with CRK, GRB2 and GRB7. Interacts with CD248; this interaction promotes PDGF receptor signaling pathway. As to quaternary structure, (Microbial infection) Interacts with human cytomegalovirus/HHV-5 envelope glycoprotein B/gB. Also interacts with the trimeric complex gH-gL-gO. Trimer-PDGFRA interaction has an inhibitory effect on PDGFRA signaling. In terms of processing, N-glycosylated. Ubiquitinated, leading to its internalization and degradation. Post-translationally, autophosphorylated on tyrosine residues upon ligand binding. Autophosphorylation occurs in trans, i.e. one subunit of the dimeric receptor phosphorylates tyrosine residues on the other subunit. Phosphorylation at Tyr-731 and Tyr-742 is important for interaction with PIK3R1. Phosphorylation at Tyr-720 and Tyr-754 is important for interaction with PTPN11. Phosphorylation at Tyr-762 is important for interaction with CRK. Phosphorylation at Tyr-572 and Tyr-574 is important for interaction with SRC and SRC family members. Phosphorylation at Tyr-988 and Tyr-1018 is important for interaction with PLCG1. Detected in platelets (at protein level). Widely expressed. Detected in brain, fibroblasts, smooth muscle, heart, and embryo. Expressed in primary and metastatic colon tumors and in normal colon tissue.

It is found in the cell membrane. The protein localises to the cell projection. The protein resides in the cilium. It localises to the golgi apparatus. It catalyses the reaction L-tyrosyl-[protein] + ATP = O-phospho-L-tyrosyl-[protein] + ADP + H(+). With respect to regulation, present in an inactive conformation in the absence of bound ligand. Binding of PDGFA and/or PDGFB leads to dimerization and activation by autophosphorylation on tyrosine residues. Inhibited by imatinib, nilotinib and sorafenib. Tyrosine-protein kinase that acts as a cell-surface receptor for PDGFA, PDGFB and PDGFC and plays an essential role in the regulation of embryonic development, cell proliferation, survival and chemotaxis. Depending on the context, promotes or inhibits cell proliferation and cell migration. Plays an important role in the differentiation of bone marrow-derived mesenchymal stem cells. Required for normal skeleton development and cephalic closure during embryonic development. Required for normal development of the mucosa lining the gastrointestinal tract, and for recruitment of mesenchymal cells and normal development of intestinal villi. Plays a role in cell migration and chemotaxis in wound healing. Plays a role in platelet activation, secretion of agonists from platelet granules, and in thrombin-induced platelet aggregation. Binding of its cognate ligands - homodimeric PDGFA, homodimeric PDGFB, heterodimers formed by PDGFA and PDGFB or homodimeric PDGFC -leads to the activation of several signaling cascades; the response depends on the nature of the bound ligand and is modulated by the formation of heterodimers between PDGFRA and PDGFRB. Phosphorylates PIK3R1, PLCG1, and PTPN11. Activation of PLCG1 leads to the production of the cellular signaling molecules diacylglycerol and inositol 1,4,5-trisphosphate, mobilization of cytosolic Ca(2+) and the activation of protein kinase C. Phosphorylates PIK3R1, the regulatory subunit of phosphatidylinositol 3-kinase, and thereby mediates activation of the AKT1 signaling pathway. Mediates activation of HRAS and of the MAP kinases MAPK1/ERK2 and/or MAPK3/ERK1. Promotes activation of STAT family members STAT1, STAT3 and STAT5A and/or STAT5B. Receptor signaling is down-regulated by protein phosphatases that dephosphorylate the receptor and its down-stream effectors, and by rapid internalization of the activated receptor. The chain is Platelet-derived growth factor receptor alpha (PDGFRA) from Homo sapiens (Human).